Here is a 181-residue protein sequence, read N- to C-terminus: Ribulose bisphosphate carboxylase small subunit, chloroplastic (181 aa).

Residues 1–54 constitute a chloroplast transit peptide; sequence MASSMLSSAAVVTSQLQATMVAPFTGLKSSAAFPVTRKTNTDITSIASNGGRVS.

This sequence belongs to the RuBisCO small chain family. Heterohexadecamer of 8 large and 8 small subunits.

The protein localises to the plastid. Its subcellular location is the chloroplast. In terms of biological role, ruBisCO catalyzes two reactions: the carboxylation of D-ribulose 1,5-bisphosphate, the primary event in carbon dioxide fixation, as well as the oxidative fragmentation of the pentose substrate. Both reactions occur simultaneously and in competition at the same active site. Although the small subunit is not catalytic it is essential for maximal activity. This is Ribulose bisphosphate carboxylase small subunit, chloroplastic from Raphanus sativus (Radish).